The chain runs to 357 residues: Serine/threonine-protein kinase nekl-2 (357 aa).

One can recognise a Protein kinase domain in the interval 4–267; it reads YEKVRVVGRG…VSQLLSDPLV (264 aa). Residues 10–18 and K35 each bind ATP; that span reads VGRGAFGVC. D137 acts as the Proton acceptor in catalysis. Residues 281–290 are compositionally biased toward basic and acidic residues; it reads IEPPPTDKRK. The segment at 281 to 357 is disordered; the sequence is IEPPPTDKRK…QSRSQVHSKY (77 aa). 2 stretches are compositionally biased toward polar residues: residues 293–327 and 336–357; these read ASLS…QLTP and FFSS…HSKY.

It belongs to the protein kinase superfamily. NEK Ser/Thr protein kinase family. NIMA subfamily. It depends on Mg(2+) as a cofactor. Expressed in hypodermal cells including in hyp7 syncytium but not in seam cells.

It is found in the cytoplasm. It carries out the reaction L-seryl-[protein] + ATP = O-phospho-L-seryl-[protein] + ADP + H(+). It catalyses the reaction L-threonyl-[protein] + ATP = O-phospho-L-threonyl-[protein] + ADP + H(+). Functionally, probable serine/threonine-protein kinase required for the completion of molting. May play a role in endocytosis in the hypodermis syncytium. In Caenorhabditis elegans, this protein is Serine/threonine-protein kinase nekl-2.